The chain runs to 263 residues: Nicotinamide riboside transporter PnuC (263 aa).

At 1–40 (MQYGMDSFGLRGIPHQVFIKKKEGKIMSLAWWKRELFGGW) the chain is on the cytoplasmic side. Residues 41–61 (THFEAVWLLMFLGIQAVVFVF) form a helical membrane-spanning segment. Asn-62 is a topological domain (periplasmic). A helical membrane pass occupies residues 63-83 (PDSWLASVAAVTGILCVVFVG). Residues 84-86 (KGK) lie on the Cytoplasmic side of the membrane. A helical membrane pass occupies residues 87-107 (ISNYLFGLISVSLYAYVSYTF). At 108–109 (KL) the chain is on the periplasmic side. A helical membrane pass occupies residues 110-131 (YGEMMLNLLVYVPVQFVGFAMW). Gln-124 is a binding site for beta-nicotinamide D-riboside. The Cytoplasmic segment spans residues 132 to 155 (RKHMALGETAETEEVKAKALTVRQ). A helical membrane pass occupies residues 156–177 (WLLVVAASVVGTSVYIEWLHHL). Residues 178 to 180 (GSA) lie on the Periplasmic side of the membrane. Residues 181 to 201 (LPTLDGVTVVVSIVAQVLMIL) traverse the membrane as a helical segment. Residue Gln-196 participates in beta-nicotinamide D-riboside binding. Residues 202-205 (RYRE) lie on the Cytoplasmic side of the membrane. Residues 206–226 (QWALWIVVNILTISLWAVAWF) form a helical membrane-spanning segment. Residues Trp-210 and Asn-214 each contribute to the beta-nicotinamide D-riboside site. Topologically, residues 227-232 (KNGETS) are periplasmic. Residues 233–253 (LPLLLMYVMYLCNSVYGYINW) traverse the membrane as a helical segment. Residue Tyr-242 participates in beta-nicotinamide D-riboside binding. Topologically, residues 254 to 263 (TKLVKRHSGQ) are cytoplasmic.

The protein belongs to the nicotinamide ribonucleoside (NR) uptake permease (TC 4.B.1) family. As to quaternary structure, homotrimer.

The protein resides in the cell inner membrane. Required for nicotinamide riboside transport across the inner membrane. The polypeptide is Nicotinamide riboside transporter PnuC (Neisseria mucosa (strain ATCC 25996 / DSM 4631 / NCTC 10774 / M26)).